The following is a 421-amino-acid chain: Expansin-like protein DDB_G0293186 (421 aa).

The first 20 residues, 1-20, serve as a signal peptide directing secretion; it reads MRTLKLIILLILSTFKTINS. N-linked (GlcNAc...) asparagine glycosylation is present at Asn19. The Expansin-like EG45 domain occupies 43-139; it reads GGQCGLPLPG…QKVSCGFSGY (97 aa). 2 cysteine pairs are disulfide-bonded: Cys46/Cys70 and Cys73/Cys134. Asn117 and Asn391 each carry an N-linked (GlcNAc...) asparagine glycan.

Belongs to the expansin family. Expansin A subfamily.

The protein resides in the secreted. Its function is as follows. May serve to lubricate the movement of the cellulose microfibrils during cell growth and wall extension and/or may serve to maintain the fluid state of the slug cell wall. The protein is Expansin-like protein DDB_G0293186 of Dictyostelium discoideum (Social amoeba).